Reading from the N-terminus, the 562-residue chain is Delta-1-pyrroline-5-carboxylate dehydrogenase, mitochondrial (562 aa).

The transit peptide at Met-1–Trp-23 directs the protein to the mitochondrion. N6-succinyllysine is present on Lys-30. Ser-43 bears the Phosphoserine mark. Position 51 is an N6-acetyllysine (Lys-51). 5 positions are modified to N6-acetyllysine; alternate: Lys-92, Lys-98, Lys-113, Lys-129, and Lys-174. 5 positions are modified to N6-succinyllysine; alternate: Lys-92, Lys-98, Lys-113, Lys-129, and Lys-174. Residues Ser-207, Lys-232, and Gly-285–Thr-289 each bind NAD(+). The active-site Proton acceptor is the Glu-313. Lys-317 carries the N6-acetyllysine modification. An N6-succinyllysine modification is found at Lys-346. Catalysis depends on Cys-347, which acts as the Nucleophile. At Lys-357 the chain carries N6-acetyllysine; alternate. Lys-357 carries the N6-succinyllysine; alternate modification. N6-acetyllysine occurs at positions 364 and 375. Residue Lys-394 is modified to N6-succinyllysine. Glu-446 is an NAD(+) binding site. Lys-461 carries the N6-acetyllysine modification. The residue at position 508 (Lys-508) is an N6-acetyllysine; alternate. Lys-508 is subject to N6-succinyllysine; alternate. A substrate-binding site is contributed by Ser-512. 2 positions are modified to N6-acetyllysine: Lys-530 and Lys-551.

Belongs to the aldehyde dehydrogenase family. In terms of assembly, homodimer. Acetylation of Lys-98, Lys-113 and Lys-401 is observed in liver mitochondria from fasted mice but not from fed mice.

The protein localises to the mitochondrion matrix. It catalyses the reaction L-glutamate 5-semialdehyde + NAD(+) + H2O = L-glutamate + NADH + 2 H(+). The protein operates within amino-acid degradation; L-proline degradation into L-glutamate; L-glutamate from L-proline: step 2/2. Irreversible conversion of delta-1-pyrroline-5-carboxylate (P5C), derived either from proline or ornithine, to glutamate. This is a necessary step in the pathway interconnecting the urea and tricarboxylic acid cycles. The preferred substrate is glutamic gamma-semialdehyde, other substrates include succinic, glutaric and adipic semialdehydes. This Mus musculus (Mouse) protein is Delta-1-pyrroline-5-carboxylate dehydrogenase, mitochondrial (Aldh4a1).